The following is a 301-amino-acid chain: Ribosomal RNA small subunit methyltransferase A (301 aa).

Positions 23, 25, 50, 72, 97, and 149 each coordinate S-adenosyl-L-methionine.

This sequence belongs to the class I-like SAM-binding methyltransferase superfamily. rRNA adenine N(6)-methyltransferase family. RsmA subfamily.

It localises to the cytoplasm. The catalysed reaction is adenosine(1518)/adenosine(1519) in 16S rRNA + 4 S-adenosyl-L-methionine = N(6)-dimethyladenosine(1518)/N(6)-dimethyladenosine(1519) in 16S rRNA + 4 S-adenosyl-L-homocysteine + 4 H(+). Functionally, specifically dimethylates two adjacent adenosines (A1518 and A1519) in the loop of a conserved hairpin near the 3'-end of 16S rRNA in the 30S particle. May play a critical role in biogenesis of 30S subunits. This Rickettsia peacockii (strain Rustic) protein is Ribosomal RNA small subunit methyltransferase A.